The following is a 755-amino-acid chain: 3-isopropylmalate dehydratase (755 aa).

Residues Cys353, Cys413, and Cys416 each coordinate [4Fe-4S] cluster. Disordered stretches follow at residues 427–446 (GERC…GAGG), 471–493 (LTPA…ELEP), and 510–529 (DAPA…AAGM). A compositionally biased stretch (low complexity) spans 510–528 (DAPATGASPPSPAPSDAAG).

Belongs to the aconitase/IPM isomerase family. Monomer. It depends on [4Fe-4S] cluster as a cofactor.

It carries out the reaction (2R,3S)-3-isopropylmalate = (2S)-2-isopropylmalate. It functions in the pathway amino-acid biosynthesis; L-leucine biosynthesis; L-leucine from 3-methyl-2-oxobutanoate: step 2/4. Its function is as follows. Catalyzes the isomerization between 2-isopropylmalate and 3-isopropylmalate, via the formation of 2-isopropylmaleate. The polypeptide is 3-isopropylmalate dehydratase (LEUA) (Rhizomucor pusillus).